The primary structure comprises 638 residues: Phosphomethylpyrimidine synthase (638 aa).

Substrate is bound by residues N236, M265, Y294, H330, 350–352 (SRG), 391–394 (DGLR), and E430. H434 contacts Zn(2+). Position 457 (Y457) interacts with substrate. Residue H498 coordinates Zn(2+). [4Fe-4S] cluster is bound by residues C578, C581, and C586. Low complexity predominate over residues 608-624 (AEGASQQEAEQGMQEMS). The tract at residues 608-633 (AEGASQQEAEQGMQEMSQKYKDAGRR) is disordered.

The protein belongs to the ThiC family. Homodimer. [4Fe-4S] cluster serves as cofactor.

It carries out the reaction 5-amino-1-(5-phospho-beta-D-ribosyl)imidazole + S-adenosyl-L-methionine = 4-amino-2-methyl-5-(phosphooxymethyl)pyrimidine + CO + 5'-deoxyadenosine + formate + L-methionine + 3 H(+). Its pathway is cofactor biosynthesis; thiamine diphosphate biosynthesis. In terms of biological role, catalyzes the synthesis of the hydroxymethylpyrimidine phosphate (HMP-P) moiety of thiamine from aminoimidazole ribotide (AIR) in a radical S-adenosyl-L-methionine (SAM)-dependent reaction. The protein is Phosphomethylpyrimidine synthase of Hahella chejuensis (strain KCTC 2396).